A 1529-amino-acid chain; its full sequence is Myosin-11 (1529 aa).

Residues 11-60 form the Myosin N-terminal SH3-like domain; sequence IVGSHVWIEDSDVAWIDGLVEKINGQDVEVQATNGKKITAKLSKIYPKDM. Residues 65-735 enclose the Myosin motor domain; the sequence is GGVDDMTKLS…QMAELDARRT (671 aa). Residues 159 to 166 and 212 to 220 contribute to the ATP site; these read GESGAGKT and NNNSSRFGK. Actin-binding regions lie at residues 498–532, 534–557, 592–616, and 616–638; these read LIEKKPGGIVALLDEACMFPKSTHETFANKLYQTF, THKRFIKPKLSRTDFAVAHYAGEV, FPPLPEETSKSSKFSSIGSRFKLQL, and LQQLMETLNSTEPHYIRCVKPNN. 6 IQ domains span residues 738–767, 761–790, 786–815, 809–838, 834–863, and 857–886; these read LSAAAKKIQRRIRTHQAQRRFILLRKATIS, LRKATISLQALCRGRLSSKIFDNLRRQAAA, RQAAAVKIQKNARRLHSRKSYKNLHVAALV, LHVAALVVQTGLRAMAAHKQFRFRKQTKAA, QTKAATTIQAQFRCHRATLYFKKLKKGVIL, and LKKGVILSQTRWRGKLARRELRQLKMASRE. Residues 887 to 1059 are a coiled coil; sequence TGALKEAKDM…VLRQQAVSIA (173 aa). Over residues 993–1027 the composition is skewed to basic and acidic residues; that stretch reads EQEKQRADDATRKFDEAQESSEDRKKKLEDTEKKA. Disordered regions lie at residues 993–1031 and 1096–1115; these read EQEKQRADDATRKFDEAQESSEDRKKKLEDTEKKAQQLQ and INRRDLSEVDDKPQKSLNEK. The Dilute domain occupies 1163–1472; sequence DRIIQTIGQA…IANMRVLMTE (310 aa).

Belongs to the TRAFAC class myosin-kinesin ATPase superfamily. Myosin family. Plant myosin class XI subfamily. Homodimer.

The protein resides in the cytoplasm. In terms of biological role, myosin heavy chain that is required for the cell cycle-regulated transport of various organelles and proteins for their segregation. Functions by binding with its tail domain to receptor proteins on organelles and exerting force with its N-terminal motor domain against actin filaments, thereby transporting its cargo along polarized actin cables. Involved in trafficking of Golgi stacks, mitochondria and peroxisomes. The polypeptide is Myosin-11 (XI-E) (Arabidopsis thaliana (Mouse-ear cress)).